The following is a 330-amino-acid chain: Probable inactive heme oxygenase 2, chloroplastic (330 aa).

2 stretches are compositionally biased toward low complexity: residues 1–13 (MPLAAAVAASAVV) and 56–69 (AAEAEAEAVAVDEA). Disordered stretches follow at residues 1–27 (MPLAAAVAASAVVPPRPPPPPPRRARP), 50–82 (PSPPAPAAEAEAEAVAVDEAPPAKPRPRRYPRQ), and 107–156 (TTLK…LEGE). A chloroplast-targeting transit peptide spans 1–47 (MPLAAAVAASAVVPPRPPPPPPRRARPLRSFTGLILTRDLAALTVAR). The segment covering 114–151 (TGAEEEVGDGVSEDASASEEEEEEEDDDDVVEEEEEGA) has biased composition (acidic residues).

It belongs to the heme oxygenase family.

The protein localises to the plastid. Its subcellular location is the chloroplast. Its function is as follows. Probable inactive heme oxygenase that may play a role in the regulation of phytochrome assembly and photomorphogenesis. The protein is Probable inactive heme oxygenase 2, chloroplastic (HO2) of Oryza sativa subsp. japonica (Rice).